The following is a 369-amino-acid chain: uncharacterized protein (369 aa).

Disordered stretches follow at residues 1-42, 60-107, 146-177, and 214-369; these read MRAA…NNNS, PSDL…KEDD, ALSM…NSSG, and LSSH…GDDD. The span at 12–24 shows a compositional bias: polar residues; it reads VGPNNNNQSNTIN. Low complexity-rich tracts occupy residues 30–42 and 70–86; these read SNSN…NNNS and YHSN…NSSS. Over residues 87-101 the composition is skewed to polar residues; the sequence is AITSGTVAPSSSMNN. Acidic residues predominate over residues 155–169; sequence DSESDISEKEDDNDG. Positions 219 to 324 are enriched in low complexity; the sequence is NNNNNSSNNN…NNNNNNSNIY (106 aa).

This is an uncharacterized protein from Dictyostelium discoideum (Social amoeba).